The following is a 226-amino-acid chain: Ras-related protein RABA4a (226 aa).

Position 2 is an N-acetylthreonine (T2). Residue 24 to 31 (GDSAVGKS) coordinates GTP. An Effector region motif is present at residues 46–54 (SKATIGVEF). Residues 72 to 76 (DTAGQ), 130 to 133 (NKSD), and 160 to 161 (SA) contribute to the GTP site. Positions 189 to 226 (ASEDQENGNPGSLAGKKIDIVPGPGQVIPNKSNMCCNS) are disordered. Over residues 217-226 (PNKSNMCCNS) the composition is skewed to polar residues. Residues C223 and C224 are each lipidated (S-geranylgeranyl cysteine).

The protein belongs to the small GTPase superfamily. Rab family. Interacts with TCTP1.

It localises to the cell membrane. Functionally, intracellular vesicle trafficking and protein transport. The protein is Ras-related protein RABA4a of Arabidopsis thaliana (Mouse-ear cress).